Consider the following 218-residue polypeptide: Grancalcin (218 aa).

4 consecutive EF-hand domains span residues 49 to 84 (SSAG…SGIS), 85 to 119 (GTYS…KELW), 120 to 155 (SALN…MGYR), and 156 to 191 (LSPQ…ALTD). Ca(2+) contacts are provided by aspartate 103, aspartate 105, threonine 107, lysine 109, aspartate 133, aspartate 135, serine 137, threonine 139, and glutamate 144.

Homodimer. Interacts with SRI and LCP1.

It localises to the cytoplasm. The protein resides in the cytoplasmic granule membrane. Functionally, calcium-binding protein that may play a role in the adhesion of neutrophils to fibronectin. May play a role in the formation of focal adhesions. The sequence is that of Grancalcin (GCA) from Pongo abelii (Sumatran orangutan).